The chain runs to 264 residues: Thymidylate synthase (264 aa).

Arg21 is a dUMP binding site. His51 lines the (6R)-5,10-methylene-5,6,7,8-tetrahydrofolate pocket. A dUMP-binding site is contributed by 126–127 (RR). Catalysis depends on Cys146, which acts as the Nucleophile. DUMP-binding positions include 166–169 (RSAD), Asn177, and 207–209 (HLY). Asp169 contributes to the (6R)-5,10-methylene-5,6,7,8-tetrahydrofolate binding site. Position 263 (Ala263) interacts with (6R)-5,10-methylene-5,6,7,8-tetrahydrofolate.

This sequence belongs to the thymidylate synthase family. Bacterial-type ThyA subfamily. As to quaternary structure, homodimer.

It is found in the cytoplasm. It carries out the reaction dUMP + (6R)-5,10-methylene-5,6,7,8-tetrahydrofolate = 7,8-dihydrofolate + dTMP. The protein operates within pyrimidine metabolism; dTTP biosynthesis. In terms of biological role, catalyzes the reductive methylation of 2'-deoxyuridine-5'-monophosphate (dUMP) to 2'-deoxythymidine-5'-monophosphate (dTMP) while utilizing 5,10-methylenetetrahydrofolate (mTHF) as the methyl donor and reductant in the reaction, yielding dihydrofolate (DHF) as a by-product. This enzymatic reaction provides an intracellular de novo source of dTMP, an essential precursor for DNA biosynthesis. This Chromobacterium violaceum (strain ATCC 12472 / DSM 30191 / JCM 1249 / CCUG 213 / NBRC 12614 / NCIMB 9131 / NCTC 9757 / MK) protein is Thymidylate synthase.